The sequence spans 34 residues: Endoglucanase 1 (34 aa).

It carries out the reaction Endohydrolysis of (1-&gt;4)-beta-D-glucosidic linkages in cellulose, lichenin and cereal beta-D-glucans.. This Sclerotinia sclerotiorum (White mold) protein is Endoglucanase 1.